The chain runs to 428 residues: MSAFIVLGAQWGDEGKGKMTDYLAEEAEVVVRFQGGNNAGHTVEVGDKQYKLHLIPSGILYDDKLNVIGNGVVVDPKALFEEINYLEGVGVKVTPEKLIISDRAQLIMPYHKTLDVLKEKARGKNDIGTTGKGIGPCYTDKFERCGIRVCDLMHEDVFKEKLEENIRMKNEYITKVLGGEPLSFSEILNEYLEFAKKLRPFVQDTSVKVYDNIKENKTVLFEGAQGMLLDIDYGTYPYVTSSNTTAGGVCSGIGVGPNMVTNAVGITKAYTTRVGKGPFPTELIDETGDWIREKGHEYGVTTGRSRRCGWLDLVIVKTAARVSGLTSLAVTKIDTLAGLEKLKVCVGYKFDGKVIDYFPASLEDLAKCEPVYEDFDGWDDSVAEARTYEELPENAKKYLNRIAEFTDTKISIIGVGPKREQTIRIDSI.

GTP-binding positions include 12–18 (GDEGKGK) and 40–42 (GHT). Asp-13 (proton acceptor) is an active-site residue. Residues Asp-13 and Gly-40 each coordinate Mg(2+). Residues 13–16 (DEGK), 38–41 (NAGH), Thr-130, Arg-144, Gln-225, Thr-240, and Arg-304 contribute to the IMP site. Residue His-41 is the Proton donor of the active site. 300 to 306 (VTTGRSR) contributes to the substrate binding site. GTP contacts are provided by residues Arg-306, 332–334 (KID), and 414–416 (GVG).

It belongs to the adenylosuccinate synthetase family. In terms of assembly, homodimer. The cofactor is Mg(2+).

The protein resides in the cytoplasm. It carries out the reaction IMP + L-aspartate + GTP = N(6)-(1,2-dicarboxyethyl)-AMP + GDP + phosphate + 2 H(+). Its pathway is purine metabolism; AMP biosynthesis via de novo pathway; AMP from IMP: step 1/2. Plays an important role in the de novo pathway of purine nucleotide biosynthesis. Catalyzes the first committed step in the biosynthesis of AMP from IMP. The sequence is that of Adenylosuccinate synthetase from Clostridium botulinum (strain Alaska E43 / Type E3).